The primary structure comprises 638 residues: Voltage-gated potassium channel KCNC2 (638 aa).

The Cytoplasmic portion of the chain corresponds to 1 to 229 (MGKIENNERV…EDPYSSRAAR (229 aa)). The disordered stretch occupies residues 47–75 (LTAAGDKLQPLPPPLSPPPRPPPLSPVPS). The span at 56–72 (PLPPPLSPPPRPPPLSP) shows a compositional bias: pro residues. Zn(2+) contacts are provided by histidine 124, cysteine 130, cysteine 151, and cysteine 152. Residues 230 to 248 (FIAFASLFFILVSITTFCL) form a helical membrane-spanning segment. N-linked (GlcNAc...) asparagine glycans are attached at residues asparagine 259 and asparagine 266. Residues 284–303 (YVEGVCVVWFTFEFLVRIVF) form a helical membrane-spanning segment. The Cytoplasmic segment spans residues 304-314 (SPNKLEFIKNL). The chain crosses the membrane as a helical span at residues 315-337 (LNIIDFVAILPFYLEVGLSGLSS). A helical; Voltage-sensor transmembrane segment spans residues 346-368 (FLRVVRFVRILRIFKLTRHFVGL). Over 369 to 381 (RVLGHTLRASTNE) the chain is Cytoplasmic. A helical transmembrane segment spans residues 382–401 (FLLLIIFLALGVLIFATMIY). Residues threonine 437, leucine 438, glycine 439, and tyrosine 440 each coordinate K(+). The Selectivity filter signature appears at 437–442 (TLGYGD). Residues 451–473 (MLVGALCALAGVLTIAMPVPVIV) traverse the membrane as a helical segment. Topologically, residues 474 to 638 (NNFGMYYSLA…RSRSPIPSIL (165 aa)) are cytoplasmic. Residues 538 to 572 (SVLSGDDSTGSEPPLSPPERLPIRRSSTRDKNRRG) are disordered. Residue serine 564 is modified to Phosphoserine; by PKA. A Phosphoserine modification is found at serine 600.

It belongs to the potassium channel family. C (Shaw) (TC 1.A.1.2) subfamily. Kv3.2/KCNC2 sub-subfamily. As to quaternary structure, homotetramer and heterotetramer with other channel-forming alpha subunits, such as KCNC1. Interacts with KCNC1. Homotetramer or heterotetramer channel activity is regulated by association with modulating ancillary subunits such as KCNE1, KCNE2 and KCNE3, creating a functionally diverse range of channel complexes. Interacts with KCNE1, KCNE2 and KCNE3. Post-translationally, phosphorylated by PKA in cortical synaptosomes. cAMP-dependent phosphorylation inhibits channel activity. Histamine H2 receptor- and PKA-induced phosphorylation extends action potential spike duration, reduces action potential spike amplitude, sustains maximum firing frequency in hippocampal interneurons; also reduces the incidence of high-frequency oscillations in hippocampal CA3 pyramidal cell layers. In terms of tissue distribution, expressed in neurons of the visual cortex during postnatal development. Expressed in neurons of the globus pallidus at postnatal age day 7 (P7), onward. Expressed in thalamic relay neurons. Expressed in neurons in layer IV and deeper cortical layers of the neocortex. Expressed in hippocampal interneurons. Expressed in nonpyramidal interneurons in the basolateral amygdala. Expressed in retinal ganglion cells (at protein level). Widely expressed in the brain. Expressed in numerous thalamic relay neurons throughout the dorsal thalamus. Expressed in interneurons of the deep layers V-VI of the cerebral cortex, the CA1 and CA3 pyramidal and dentate gyrus (DG) granule cells of the hippocampus, in neurons of the caudate-putamen, globus pallidus and subthalamic nucleus. Also expressed in the optic layer of interior colliculus, the inferior colliculus, the red nucleus, the medial geniculate, the ventral lateral lemiscus, the reticulotegmental nucleus and in the deep cerebellar nuclei. Expressed in globus pallidus (GP) neurons.

Its subcellular location is the cell membrane. It localises to the membrane. The protein localises to the perikaryon. The protein resides in the cell projection. It is found in the axon. Its subcellular location is the synapse. It localises to the synaptosome. The protein localises to the dendrite. The protein resides in the postsynaptic cell membrane. It is found in the presynaptic cell membrane. Its subcellular location is the apical cell membrane. It localises to the basolateral cell membrane. The catalysed reaction is K(+)(in) = K(+)(out). With respect to regulation, inhibited by Stichodactyla helianthus peptide ShK. Inhibited by millimolar levels of tetraethylammonium (TEA). Contrary to other channels, inhibited only by millimolar levels of 4-aminopyridine (4-AP). Functionally, voltage-gated potassium channel that mediates transmembrane potassium transport in excitable membranes, primarily in the brain. Contributes to the regulation of the fast action potential repolarization and in sustained high-frequency firing in neurons of the central nervous system. Homotetramer channels mediate delayed-rectifier voltage-dependent potassium currents that activate rapidly at high-threshold voltages and inactivate slowly. Forms tetrameric channels through which potassium ions pass in accordance with their electrochemical gradient. The channel alternates between opened and closed conformations in response to the voltage difference across the membrane. Can form functional homotetrameric channels and heterotetrameric channels that contain variable proportions of KCNC1, and possibly other family members as well; channel properties depend on the type of alpha subunits that are part of the channel. Channel properties may be modulated either by the association with ancillary subunits, such as KCNE1, KCNE2 and KCNE3 or indirectly by nitric oxide (NO) through a cGMP- and PKG-mediated signaling cascade, slowing channel activation and deactivation of delayed rectifier potassium channels. Contributes to fire sustained trains of very brief action potentials at high frequency in retinal ganglion cells, thalamocortical and suprachiasmatic nucleus (SCN) neurons and in hippocampal and neocortical interneurons. Sustained maximal action potential firing frequency in inhibitory hippocampal interneurons is negatively modulated by histamine H2 receptor activation in a cAMP- and protein kinase (PKA) phosphorylation-dependent manner. Plays a role in maintaining the fidelity of synaptic transmission in neocortical GABAergic interneurons by generating action potential (AP) repolarization at nerve terminals, thus reducing spike-evoked calcium influx and GABA neurotransmitter release. Required for long-range synchronization of gamma oscillations over distance in the neocortex. Contributes to the modulation of the circadian rhythm of spontaneous action potential firing in suprachiasmatic nucleus (SCN) neurons in a light-dependent manner. The protein is Voltage-gated potassium channel KCNC2 of Rattus norvegicus (Rat).